Consider the following 143-residue polypeptide: ATP synthase subunit b' (143 aa).

Residues 6–26 (ATLPLMALQFVLLAIILNAIF) form a helical membrane-spanning segment.

It belongs to the ATPase B chain family. As to quaternary structure, F-type ATPases have 2 components, F(1) - the catalytic core - and F(0) - the membrane proton channel. F(1) has five subunits: alpha(3), beta(3), gamma(1), delta(1), epsilon(1). F(0) has four main subunits: a(1), b(1), b'(1) and c(10-14). The alpha and beta chains form an alternating ring which encloses part of the gamma chain. F(1) is attached to F(0) by a central stalk formed by the gamma and epsilon chains, while a peripheral stalk is formed by the delta, b and b' chains.

It localises to the cellular thylakoid membrane. In terms of biological role, f(1)F(0) ATP synthase produces ATP from ADP in the presence of a proton or sodium gradient. F-type ATPases consist of two structural domains, F(1) containing the extramembraneous catalytic core and F(0) containing the membrane proton channel, linked together by a central stalk and a peripheral stalk. During catalysis, ATP synthesis in the catalytic domain of F(1) is coupled via a rotary mechanism of the central stalk subunits to proton translocation. Its function is as follows. Component of the F(0) channel, it forms part of the peripheral stalk, linking F(1) to F(0). The b'-subunit is a diverged and duplicated form of b found in plants and photosynthetic bacteria. This chain is ATP synthase subunit b', found in Crocosphaera subtropica (strain ATCC 51142 / BH68) (Cyanothece sp. (strain ATCC 51142)).